Here is a 245-residue protein sequence, read N- to C-terminus: 1-(5-phosphoribosyl)-5-[(5-phosphoribosylamino)methylideneamino] imidazole-4-carboxamide isomerase (245 aa).

Residue aspartate 10 is the Proton acceptor of the active site. The Proton donor role is filled by aspartate 129.

The protein belongs to the HisA/HisF family.

The protein localises to the cytoplasm. The catalysed reaction is 1-(5-phospho-beta-D-ribosyl)-5-[(5-phospho-beta-D-ribosylamino)methylideneamino]imidazole-4-carboxamide = 5-[(5-phospho-1-deoxy-D-ribulos-1-ylimino)methylamino]-1-(5-phospho-beta-D-ribosyl)imidazole-4-carboxamide. Its pathway is amino-acid biosynthesis; L-histidine biosynthesis; L-histidine from 5-phospho-alpha-D-ribose 1-diphosphate: step 4/9. The protein is 1-(5-phosphoribosyl)-5-[(5-phosphoribosylamino)methylideneamino] imidazole-4-carboxamide isomerase of Parafrankia sp. (strain EAN1pec).